A 391-amino-acid polypeptide reads, in one-letter code: ATP phosphoribosyltransferase regulatory subunit (391 aa).

It belongs to the class-II aminoacyl-tRNA synthetase family. HisZ subfamily. Heteromultimer composed of HisG and HisZ subunits.

It is found in the cytoplasm. It participates in amino-acid biosynthesis; L-histidine biosynthesis; L-histidine from 5-phospho-alpha-D-ribose 1-diphosphate: step 1/9. Required for the first step of histidine biosynthesis. May allow the feedback regulation of ATP phosphoribosyltransferase activity by histidine. In Nitrosomonas europaea (strain ATCC 19718 / CIP 103999 / KCTC 2705 / NBRC 14298), this protein is ATP phosphoribosyltransferase regulatory subunit.